Here is a 91-residue protein sequence, read N- to C-terminus: Small ribosomal subunit protein uS15c (91 aa).

Belongs to the universal ribosomal protein uS15 family. In terms of assembly, part of the 30S ribosomal subunit.

The protein localises to the plastid. The protein resides in the chloroplast. The polypeptide is Small ribosomal subunit protein uS15c (rps15) (Phalaenopsis aphrodite subsp. formosana (Moth orchid)).